Reading from the N-terminus, the 750-residue chain is Cellulose synthase-like protein H1 (750 aa).

Transmembrane regions (helical) follow at residues 27–47 and 52–72; these read LAILFLLLALLLHRVLHDSGA and AALACEAWFTFMWLLNVNAKW. Residues aspartate 137 and aspartate 459 contribute to the active site. Transmembrane regions (helical) follow at residues 537-557, 570-590, 608-628, 664-684, 697-717, and 727-747; these read VWPVRAPFELCYALLGPYCLL, GFYIALALFIAYNTYMFMEFI, ITSASAWLLAFLTVILKTLGF, VFIPVTALAMLSVIAIAVGAW, GPGISEFISCGWLVLCFMPLL, and GIPWSIKMKACLLVAIFLLFC.

It belongs to the glycosyltransferase 2 family. Plant cellulose synthase-like H subfamily.

The protein localises to the golgi apparatus membrane. Functionally, thought to be a Golgi-localized beta-glycan synthase that polymerize the backbones of noncellulosic polysaccharides (hemicelluloses) of plant cell wall. This chain is Cellulose synthase-like protein H1 (CSLH1), found in Oryza sativa subsp. japonica (Rice).